The primary structure comprises 70 residues: ATP synthase subunit c (70 aa).

Transmembrane regions (helical) follow at residues 4 to 24 and 48 to 68; these read IAAG…NGML and ISMA…FVLI.

Belongs to the ATPase C chain family. F-type ATPases have 2 components, F(1) - the catalytic core - and F(0) - the membrane proton channel. F(1) has five subunits: alpha(3), beta(3), gamma(1), delta(1), epsilon(1). F(0) has three main subunits: a(1), b(2) and c(10-14). The alpha and beta chains form an alternating ring which encloses part of the gamma chain. F(1) is attached to F(0) by a central stalk formed by the gamma and epsilon chains, while a peripheral stalk is formed by the delta and b chains.

It localises to the cell membrane. F(1)F(0) ATP synthase produces ATP from ADP in the presence of a proton or sodium gradient. F-type ATPases consist of two structural domains, F(1) containing the extramembraneous catalytic core and F(0) containing the membrane proton channel, linked together by a central stalk and a peripheral stalk. During catalysis, ATP synthesis in the catalytic domain of F(1) is coupled via a rotary mechanism of the central stalk subunits to proton translocation. Functionally, key component of the F(0) channel; it plays a direct role in translocation across the membrane. A homomeric c-ring of between 10-14 subunits forms the central stalk rotor element with the F(1) delta and epsilon subunits. The protein is ATP synthase subunit c of Oenococcus oeni (strain ATCC BAA-331 / PSU-1).